Consider the following 481-residue polypeptide: Cysteine protease atg-4.1 (481 aa).

Residue Cys-112 is the Nucleophile of the active site. Catalysis depends on residues Asp-313 and His-315. Residues 462-481 are disordered; it reads DVHTEEEDADEDNDDDVANA.

It belongs to the peptidase C54 family.

Its subcellular location is the cytoplasm. It catalyses the reaction [protein]-C-terminal L-amino acid-glycyl-phosphatidylethanolamide + H2O = [protein]-C-terminal L-amino acid-glycine + a 1,2-diacyl-sn-glycero-3-phosphoethanolamine. Its function is as follows. Cysteine protease required for autophagy. Cleaves the C-terminal amino acid of ATG8 family proteins lgg-1, to reveal a C-terminal glycine. Exposure of the glycine at the C-terminus is essential for ATG8 proteins conjugation to phosphatidylethanolamine (PE) and insertion to membranes, which is necessary for autophagy. Its cleavage activity is functionally redundant to atg-4.2, but it cleaves lgg-1 precursors more efficiently than atg-4.2. Acts redundantly with atg-4.2 to promote the lgg-1 delipidation to release the protein from membranes, which facilitates multiple events during macroautophagy. Unlike atg-4.2 does not seem to be required for autophagosome maturation. The chain is Cysteine protease atg-4.1 from Caenorhabditis elegans.